A 208-amino-acid chain; its full sequence is Golgi apparatus membrane protein TVP23 homolog B (208 aa).

M1 is modified (N-acetylmethionine). Positions 1 to 21 are enriched in acidic residues; the sequence is MLQQDSNDDTEDVSLFDAEEE. The interval 1-27 is disordered; sequence MLQQDSNDDTEDVSLFDAEEETTNRPK. A run of 4 helical transmembrane segments spans residues 34–53, 54–72, 126–146, and 152–172; these read PVAS…VYLL, CELF…ILLL, IFWL…FSAL, and KWLA…YGYI.

This sequence belongs to the TVP23 family.

Its subcellular location is the membrane. The chain is Golgi apparatus membrane protein TVP23 homolog B (TVP23B) from Bos taurus (Bovine).